Reading from the N-terminus, the 400-residue chain is MTKTTYPGTAYRPILSEQEADRFTLPHYFTRRGHDGHSDTDVWQPTSIEVDPATPWVVGPQVGVDGATHGTVQQAVNAALRAQQDRPCIDIKLLPGIYTGAVYIPADAPPLTLFGTGEQPNDVVIQLALDSMFSPATYRETVNSHGEYQPGDPAWYMYDLCASKQNATIDTICAAVVWSQSDNLQMKNLTVVNALLDSVDGRAHQAVALRTDGDKIQLERVRLIGRQDTFFVNTSNLRNEYVTDRYSRAYIKDSYIEGDVDYVFGRATAVFDRVHFHTVSSRGAKDIHVFAPDSMPWAQYGFLAVSCRFTGDEGFSGGRKAKLGRAWDQGARQTGYQPNKTANGQLVIRDSTIDASYDREQPWGVAATTARPFAGNVDSARNLDDVQFNRLWEYNNIDEV.

Substrate is bound by residues threonine 171 and glutamine 205. Catalysis depends on aspartate 228, which acts as the Proton donor. Residue aspartate 261 is the Nucleophile of the active site. Positions 325 and 327 each coordinate substrate.

This sequence belongs to the pectinesterase family.

The enzyme catalyses [(1-&gt;4)-alpha-D-galacturonosyl methyl ester](n) + n H2O = [(1-&gt;4)-alpha-D-galacturonosyl](n) + n methanol + n H(+). It participates in glycan metabolism; pectin degradation; 2-dehydro-3-deoxy-D-gluconate from pectin: step 1/5. This is Pectinesterase B (pemB) from Pectobacterium parmentieri.